Here is a 418-residue protein sequence, read N- to C-terminus: Metacaspase-2 (418 aa).

Residues 68-113 (PSPYTHAPHAPSPFNHAPPDSYPFTHAPPASSPFNHAPPGPPPPVH) are disordered. Positions 70–80 (PYTHAPHAPSP) are enriched in low complexity. A compositionally biased stretch (pro residues) spans 103–112 (HAPPGPPPPV). Catalysis depends on residues histidine 200 and cysteine 256. The segment at 385-406 (PDEEEEVNQAPQKTQEPQLSAN) is disordered. The segment covering 393-405 (QAPQKTQEPQLSA) has biased composition (polar residues).

Belongs to the peptidase C14B family.

Acts as a negative regulator of oxidative stress cell death and hypersensitive cell death response mediated by immune response. Acts via indirect or direct regulation of AMC1 at postranscriptional level. The chain is Metacaspase-2 (AMC2) from Arabidopsis thaliana (Mouse-ear cress).